A 312-amino-acid chain; its full sequence is Prephenate dehydratase (312 aa).

Residues 3–194 (GIAYLGPEGT…ARTRFVLVGR (192 aa)) enclose the Prephenate dehydratase domain. Residues 208–285 (SVVLQLDNVP…ADVRYLGSWP (78 aa)) enclose the ACT domain. The disordered stretch occupies residues 291–312 (GAAPPPMDESASWLEGLREGRP).

In terms of assembly, homodimer.

The enzyme catalyses prephenate + H(+) = 3-phenylpyruvate + CO2 + H2O. It functions in the pathway amino-acid biosynthesis; L-phenylalanine biosynthesis; phenylpyruvate from prephenate: step 1/1. The polypeptide is Prephenate dehydratase (pheA) (Mycolicibacterium vanbaalenii (strain DSM 7251 / JCM 13017 / BCRC 16820 / KCTC 9966 / NRRL B-24157 / PYR-1) (Mycobacterium vanbaalenii)).